An 85-amino-acid polypeptide reads, in one-letter code: Colicin-E8 immunity protein in ColE6 (85 aa).

Belongs to the colicins ColE2/ColE8/ColE9 and pyocins S1/S2 family.

This Escherichia coli protein is Colicin-E8 immunity protein in ColE6 (imm).